Here is a 191-residue protein sequence, read N- to C-terminus: SCO2-like protein RP031 (191 aa).

The protein belongs to the SCO1/2 family.

The chain is SCO2-like protein RP031 from Rickettsia prowazekii (strain Madrid E).